The primary structure comprises 252 residues: Indole-3-glycerol phosphate synthase (252 aa).

Belongs to the TrpC family.

The catalysed reaction is 1-(2-carboxyphenylamino)-1-deoxy-D-ribulose 5-phosphate + H(+) = (1S,2R)-1-C-(indol-3-yl)glycerol 3-phosphate + CO2 + H2O. Its pathway is amino-acid biosynthesis; L-tryptophan biosynthesis; L-tryptophan from chorismate: step 4/5. The polypeptide is Indole-3-glycerol phosphate synthase (Listeria monocytogenes serotype 4b (strain CLIP80459)).